The following is a 195-amino-acid chain: Inner membrane protein YohC (195 aa).

The Cytoplasmic portion of the chain corresponds to Met-1–His-32. The helical transmembrane segment at Val-33 to Phe-55 threads the bilayer. The Periplasmic segment spans residues Gly-56–Ser-64. The chain crosses the membrane as a helical span at residues Trp-65–Gly-87. Topologically, residues Arg-88–Met-107 are cytoplasmic. The helical transmembrane segment at Val-108 to Trp-130 threads the bilayer. Residues Leu-131–Leu-134 lie on the Periplasmic side of the membrane. Residues Val-135 to Ile-157 traverse the membrane as a helical segment. Residues Asn-158–Thr-169 lie on the Cytoplasmic side of the membrane. The chain crosses the membrane as a helical span at residues Leu-170–Tyr-192. Residues Arg-193–Phe-195 lie on the Periplasmic side of the membrane.

It localises to the cell inner membrane. In Escherichia coli O6:H1 (strain CFT073 / ATCC 700928 / UPEC), this protein is Inner membrane protein YohC (yohC).